The sequence spans 512 residues: Ribonuclease Y (512 aa).

A helical transmembrane segment spans residues 2–22; it reads VGMYIIIPIVTFIIGGLLAWL. The 61-residue stretch at 202-262 folds into the KH domain; it reads SITVFHIESD…VRREIARLAL (61 aa). Positions 328 to 421 constitute an HD domain; that stretch reads LLQHARETAN…VQVCDAISGA (94 aa).

The protein belongs to the RNase Y family.

The protein resides in the cell membrane. In terms of biological role, endoribonuclease that initiates mRNA decay. The protein is Ribonuclease Y of Parabacteroides distasonis (strain ATCC 8503 / DSM 20701 / CIP 104284 / JCM 5825 / NCTC 11152).